The chain runs to 146 residues: Ribosome maturation factor RimP (146 aa).

It belongs to the RimP family.

It is found in the cytoplasm. Functionally, required for maturation of 30S ribosomal subunits. The polypeptide is Ribosome maturation factor RimP (Helicobacter pylori (strain G27)).